The primary structure comprises 214 residues: Pyrrolidone-carboxylate peptidase 2 (214 aa).

Catalysis depends on residues E78, C141, and H165.

It belongs to the peptidase C15 family. As to quaternary structure, homotetramer.

The protein resides in the cytoplasm. The enzyme catalyses Release of an N-terminal pyroglutamyl group from a polypeptide, the second amino acid generally not being Pro.. Functionally, removes 5-oxoproline from various penultimate amino acid residues except L-proline. In Streptococcus pneumoniae serotype 4 (strain ATCC BAA-334 / TIGR4), this protein is Pyrrolidone-carboxylate peptidase 2.